Reading from the N-terminus, the 573-residue chain is Pyrophosphate--fructose 6-phosphate 1-phosphotransferase (573 aa).

Glycine 90 contacts diphosphate. Aspartate 184 contacts Mg(2+). Substrate-binding positions include 212–214, 251–252, 259–261, glutamate 320, and 434–437; these read TID, KY, MGR, and YEGR. Aspartate 214 functions as the Proton acceptor in the catalytic mechanism.

It belongs to the phosphofructokinase type A (PFKA) family. PPi-dependent PFK group II subfamily. Clade 'Long' sub-subfamily. Homodimer. Mg(2+) is required as a cofactor.

The protein localises to the cytoplasm. The catalysed reaction is beta-D-fructose 6-phosphate + diphosphate = beta-D-fructose 1,6-bisphosphate + phosphate + H(+). It functions in the pathway carbohydrate degradation; glycolysis; D-glyceraldehyde 3-phosphate and glycerone phosphate from D-glucose: step 3/4. Non-allosteric. Functionally, catalyzes the phosphorylation of D-fructose 6-phosphate, the first committing step of glycolysis. Uses inorganic phosphate (PPi) as phosphoryl donor instead of ATP like common ATP-dependent phosphofructokinases (ATP-PFKs), which renders the reaction reversible, and can thus function both in glycolysis and gluconeogenesis. Consistently, PPi-PFK can replace the enzymes of both the forward (ATP-PFK) and reverse (fructose-bisphosphatase (FBPase)) reactions. In Treponema pallidum (strain Nichols), this protein is Pyrophosphate--fructose 6-phosphate 1-phosphotransferase.